A 259-amino-acid chain; its full sequence is Deoxyribose-phosphate aldolase (259 aa).

Catalysis depends on D102, which acts as the Proton donor/acceptor. The active-site Schiff-base intermediate with acetaldehyde is the K167. K201 serves as the catalytic Proton donor/acceptor.

The protein belongs to the DeoC/FbaB aldolase family. DeoC type 2 subfamily.

It localises to the cytoplasm. It catalyses the reaction 2-deoxy-D-ribose 5-phosphate = D-glyceraldehyde 3-phosphate + acetaldehyde. The protein operates within carbohydrate degradation; 2-deoxy-D-ribose 1-phosphate degradation; D-glyceraldehyde 3-phosphate and acetaldehyde from 2-deoxy-alpha-D-ribose 1-phosphate: step 2/2. Catalyzes a reversible aldol reaction between acetaldehyde and D-glyceraldehyde 3-phosphate to generate 2-deoxy-D-ribose 5-phosphate. The protein is Deoxyribose-phosphate aldolase of Klebsiella pneumoniae (strain 342).